The chain runs to 167 residues: Signal peptidase complex catalytic subunit SEC11 (167 aa).

The Cytoplasmic segment spans residues 1–12 (MNLRLELTRFLK). Residues 13 to 30 (LCFVLSSAFMFWKGLSIA) traverse the membrane as a helical; Signal-anchor for type II membrane protein segment. Over 31–167 (TNSHSPIVVV…LGISALLSNE (137 aa)) the chain is Lumenal. Catalysis depends on charge relay system residues S44, H83, and D109. Residues 153–164 (ALMGFLGISALL) form a C-terminal short (CTS) helix region.

The protein belongs to the peptidase S26B family. Component of the signal peptidase complex (SPC) composed of a catalytic subunit SEC11 and three accessory subunits SPC1, SPC2 and SPC3. The complex induces a local thinning of the ER membrane which is used to measure the length of the signal peptide (SP) h-region of protein substrates. This ensures the selectivity of the complex towards h-regions shorter than 18-20 amino acids. SPC associates with the translocon complex.

It is found in the endoplasmic reticulum membrane. The enzyme catalyses Cleavage of hydrophobic, N-terminal signal or leader sequences from secreted and periplasmic proteins.. Its function is as follows. Catalytic component of the signal peptidase complex (SPC) which catalyzes the cleavage of N-terminal signal sequences from nascent proteins as they are translocated into the lumen of the endoplasmic reticulum. Specifically cleaves N-terminal signal peptides that contain a hydrophobic alpha-helix (h-region) shorter than 18-20 amino acids. The polypeptide is Signal peptidase complex catalytic subunit SEC11 (SEC11) (Zygosaccharomyces rouxii (strain ATCC 2623 / CBS 732 / NBRC 1130 / NCYC 568 / NRRL Y-229)).